The following is a 257-amino-acid chain: MLLAIDCGNTNTVFSLWDGTRFVATWRTSTEWQRTADQYYVWLRTLMQFQKLEVEITDVIISSTVPRVVFNLRVFADRYFNTRPLVVGKPDCLLPVDVRVDEGTQVGPDRLVNTVAGFDLFGGDLIMVDFGTATTFDVVDTDGAYVGGVIAPGVNLSLEALHQAAAALPHVDITKPQSVVGTNTVACMQSGVFWGYVGLVREICERIKAERARDMRVISTGGLAPLFQQTEALFDAYQEDLTMHGLTVIYKYNKETE.

Position 6–13 (6–13 (DCGNTNTV)) interacts with ATP. Residue 107–110 (GPDR) coordinates substrate. The active-site Proton acceptor is the Asp-109. Residue Asp-129 participates in K(+) binding. Residue Thr-132 coordinates ATP. A substrate-binding site is contributed by Thr-184.

The protein belongs to the type III pantothenate kinase family. In terms of assembly, homodimer. The cofactor is NH4(+). K(+) is required as a cofactor.

The protein resides in the cytoplasm. The enzyme catalyses (R)-pantothenate + ATP = (R)-4'-phosphopantothenate + ADP + H(+). It functions in the pathway cofactor biosynthesis; coenzyme A biosynthesis; CoA from (R)-pantothenate: step 1/5. Functionally, catalyzes the phosphorylation of pantothenate (Pan), the first step in CoA biosynthesis. The chain is Type III pantothenate kinase from Roseobacter denitrificans (strain ATCC 33942 / OCh 114) (Erythrobacter sp. (strain OCh 114)).